A 183-amino-acid chain; its full sequence is Ribose 1,5-bisphosphate phosphokinase PhnN (183 aa).

This sequence belongs to the ribose 1,5-bisphosphokinase family.

It carries out the reaction alpha-D-ribose 1,5-bisphosphate + ATP = 5-phospho-alpha-D-ribose 1-diphosphate + ADP. The protein operates within metabolic intermediate biosynthesis; 5-phospho-alpha-D-ribose 1-diphosphate biosynthesis; 5-phospho-alpha-D-ribose 1-diphosphate from D-ribose 5-phosphate (route II): step 3/3. Its function is as follows. Catalyzes the phosphorylation of ribose 1,5-bisphosphate to 5-phospho-D-ribosyl alpha-1-diphosphate (PRPP). The chain is Ribose 1,5-bisphosphate phosphokinase PhnN from Azotobacter vinelandii (strain DJ / ATCC BAA-1303).